The primary structure comprises 287 residues: Large ribosomal subunit protein uL2 (287 aa).

Residues R221–S287 are disordered. Positions K258 to S287 are enriched in basic residues.

This sequence belongs to the universal ribosomal protein uL2 family. As to quaternary structure, part of the 50S ribosomal subunit. Forms a bridge to the 30S subunit in the 70S ribosome.

In terms of biological role, one of the primary rRNA binding proteins. Required for association of the 30S and 50S subunits to form the 70S ribosome, for tRNA binding and peptide bond formation. It has been suggested to have peptidyltransferase activity; this is somewhat controversial. Makes several contacts with the 16S rRNA in the 70S ribosome. This Prochlorococcus marinus (strain MIT 9301) protein is Large ribosomal subunit protein uL2.